The primary structure comprises 1066 residues: Pumilio homolog 2 (1066 aa).

An interaction with SNAPIN region spans residues 1-260; the sequence is MNHDFQALAL…TVGLFDYNSQ (260 aa). Phosphoserine occurs at positions 67, 70, 82, and 102. 3 disordered regions span residues 106–203, 368–408, and 490–551; these read KLDS…GPLP, TANQ…AESL, and TGST…SASL. Residues 119-133 are compositionally biased toward basic and acidic residues; that stretch reads RDAETDGPEKGDQKG. Phosphoserine occurs at positions 136, 177, and 181. T183 carries the phosphothreonine modification. Positions 368 to 383 are enriched in low complexity; that stretch reads TANQQAASQAQPGQQQ. The span at 394 to 406 shows a compositional bias: polar residues; that stretch reads ITPSQGQQGQQAE. T395 carries the phosphothreonine modification. The span at 503 to 514 shows a compositional bias: low complexity; it reads QPPQQQQQQQQP. The segment covering 515 to 525 has biased composition (polar residues); sequence STNLQSNSFYG. Residues 526–540 show a composition bias toward low complexity; it reads SSSLTNSSQSSSLFS. Phosphoserine occurs at positions 587 and 592. The segment at 620 to 650 is disordered; sequence SPIGMPLPSQTPGHSLTPPPSLSSHGSSSSL. Low complexity predominate over residues 630–650; it reads TPGHSLTPPPSLSSHGSSSSL. Omega-N-methylarginine is present on R674. Residues S684 and S700 each carry the phosphoserine modification. The PUM-HD domain occupies 706 to 1048; sequence GRSRLLEDFR…HILAKLEKYY (343 aa). Pumilio repeat units follow at residues 726 to 761, 762 to 797, 798 to 835, 836 to 871, 872 to 907, 908 to 943, 944 to 979, and 980 to 1022; these read DLIG…IVFN, EILQ…ALAT, RIRG…EMVK, ELDG…FIID, AFKG…PILE, ELHQ…KIVS, EIRG…LLID, and EVCC…IIMH. An adenine-nucleotide binding in RNA target region spans residues 741–745; it reads SRFIQ. The interval 777–781 is uracil-nucleotide binding in RNA target; that stretch reads NYVIQ. Residues 813-817 are adenine-nucleotide binding in RNA target; it reads CRVIQ. The segment at 851-855 is non-specific-nucleotide binding in RNA target; the sequence is NHVVQ. Residues 887–891 form an adenine-nucleotide binding in RNA target region; sequence CRVIQ. The interval 923–927 is uracil-nucleotide binding in RNA target; it reads NYVIQ. Residues 959-963 are guanine-nucleotide binding in RNA target; the sequence is SNVVE. The uracil-nucleotide binding in RNA target stretch occupies residues 1002-1006; sequence NYVVQ.

Homodimer; homodimerizes in vitro. Interacts with DAZ1, DAZL and NANOS1 via its pumilio repeats. Interacts with NANOS3. Interacts with SNAPIN. Recruits the CCR4-POP2-NOT deadenylase leading to translational inhibition and mRNA degradation. Interacts with DDX20. In case of viral infection, interacts with DHX58. In terms of tissue distribution, widely expressed. Expressed in embryonic stem cells, heart, kidney, lung, skin, intestine, spleen and thymus. Expressed at intermediate level in brain and liver. Weakly or not expressed in muscles and stomach. Expressed at various stages of myeloid and lymphoid cell development. In the testis expressed in the spermatogoni, spermatocytes, spermatids and Sertoli cells.

It is found in the cytoplasm. Its subcellular location is the cytoplasmic granule. The protein localises to the perinuclear region. Functionally, sequence-specific RNA-binding protein that acts as a post-transcriptional repressor by binding the 3'-UTR of mRNA targets. Binds to an RNA consensus sequence, the Pumilio Response Element (PRE), 5'-UGUANAUA-3', that is related to the Nanos Response Element (NRE). Mediates post-transcriptional repression of transcripts via different mechanisms: acts via direct recruitment of the CCR4-POP2-NOT deadenylase leading to translational inhibition and mRNA degradation. Also mediates deadenylation-independent repression by promoting accessibility of miRNAs. Acts as a post-transcriptional repressor of E2F3 mRNAs by binding to its 3'-UTR and facilitating miRNA regulation. Plays a role in cytoplasmic sensing of viral infection. Represses a program of genes necessary to maintain genomic stability such as key mitotic, DNA repair and DNA replication factors. Its ability to repress those target mRNAs is regulated by the lncRNA NORAD (non-coding RNA activated by DNA damage) which, due to its high abundance and multitude of PUMILIO binding sites, is able to sequester a significant fraction of PUM1 and PUM2 in the cytoplasm. May regulate DCUN1D3 mRNA levels. May support proliferation and self-renewal of stem cells. Binds specifically to miRNA MIR199A precursor, with PUM1, regulates miRNA MIR199A expression at a postranscriptional level. The protein is Pumilio homolog 2 (Pum2) of Mus musculus (Mouse).